The following is a 242-amino-acid chain: uncharacterized protein (242 aa).

The region spanning 17 to 85 (QRVDERIATT…HGSGSVVRDP (69 aa)) is the HTH gntR-type domain. The H-T-H motif DNA-binding region spans 45 to 64 (ERDLAERLGVNRTSLRQGLA).

This is an uncharacterized protein from Mycobacterium tuberculosis (strain ATCC 25618 / H37Rv).